The sequence spans 452 residues: Exodeoxyribonuclease 7 large subunit (452 aa).

This sequence belongs to the XseA family. As to quaternary structure, heterooligomer composed of large and small subunits.

It localises to the cytoplasm. It catalyses the reaction Exonucleolytic cleavage in either 5'- to 3'- or 3'- to 5'-direction to yield nucleoside 5'-phosphates.. Bidirectionally degrades single-stranded DNA into large acid-insoluble oligonucleotides, which are then degraded further into small acid-soluble oligonucleotides. In Bacillus mycoides (strain KBAB4) (Bacillus weihenstephanensis), this protein is Exodeoxyribonuclease 7 large subunit.